Consider the following 211-residue polypeptide: Thiamine-phosphate synthase (211 aa).

4-amino-2-methyl-5-(diphosphooxymethyl)pyrimidine is bound by residues 39-43 and Asn71; that span reads QLREK. Asp72 and Asp91 together coordinate Mg(2+). Ser110 serves as a coordination point for 4-amino-2-methyl-5-(diphosphooxymethyl)pyrimidine. 136 to 138 contributes to the 2-[(2R,5Z)-2-carboxy-4-methylthiazol-5(2H)-ylidene]ethyl phosphate binding site; it reads TAT. Lys139 lines the 4-amino-2-methyl-5-(diphosphooxymethyl)pyrimidine pocket. Residues Ala167 and 187–188 each bind 2-[(2R,5Z)-2-carboxy-4-methylthiazol-5(2H)-ylidene]ethyl phosphate; that span reads VS.

It belongs to the thiamine-phosphate synthase family. It depends on Mg(2+) as a cofactor.

It carries out the reaction 2-[(2R,5Z)-2-carboxy-4-methylthiazol-5(2H)-ylidene]ethyl phosphate + 4-amino-2-methyl-5-(diphosphooxymethyl)pyrimidine + 2 H(+) = thiamine phosphate + CO2 + diphosphate. It catalyses the reaction 2-(2-carboxy-4-methylthiazol-5-yl)ethyl phosphate + 4-amino-2-methyl-5-(diphosphooxymethyl)pyrimidine + 2 H(+) = thiamine phosphate + CO2 + diphosphate. The catalysed reaction is 4-methyl-5-(2-phosphooxyethyl)-thiazole + 4-amino-2-methyl-5-(diphosphooxymethyl)pyrimidine + H(+) = thiamine phosphate + diphosphate. Its pathway is cofactor biosynthesis; thiamine diphosphate biosynthesis; thiamine phosphate from 4-amino-2-methyl-5-diphosphomethylpyrimidine and 4-methyl-5-(2-phosphoethyl)-thiazole: step 1/1. Condenses 4-methyl-5-(beta-hydroxyethyl)thiazole monophosphate (THZ-P) and 2-methyl-4-amino-5-hydroxymethyl pyrimidine pyrophosphate (HMP-PP) to form thiamine monophosphate (TMP). This is Thiamine-phosphate synthase from Solidesulfovibrio magneticus (strain ATCC 700980 / DSM 13731 / RS-1) (Desulfovibrio magneticus).